A 156-amino-acid chain; its full sequence is MQWTAAFGSLARLVSRGDAFVTYVPPAPSIVDDIIAQVKFDANGLISALAQAPDGVVLMLAWMNADALRETLLTGRVCYWSRSRQKLWRKGETSGQQQKLIEARLDCDMDAVLMIVDQTGVACHTGRRSCFYHGVTPDGLRDTSQPEISAEELYGR.

A Mg(2+)-binding site is contributed by aspartate 106. Residue cysteine 107 participates in Zn(2+) binding. Mg(2+)-binding residues include aspartate 108 and aspartate 110. Cysteine 123 and cysteine 130 together coordinate Zn(2+).

This sequence belongs to the PRA-CH family. In terms of assembly, homodimer. Mg(2+) is required as a cofactor. The cofactor is Zn(2+).

The protein localises to the cytoplasm. The catalysed reaction is 1-(5-phospho-beta-D-ribosyl)-5'-AMP + H2O = 1-(5-phospho-beta-D-ribosyl)-5-[(5-phospho-beta-D-ribosylamino)methylideneamino]imidazole-4-carboxamide. It participates in amino-acid biosynthesis; L-histidine biosynthesis; L-histidine from 5-phospho-alpha-D-ribose 1-diphosphate: step 3/9. Catalyzes the hydrolysis of the adenine ring of phosphoribosyl-AMP. This chain is Phosphoribosyl-AMP cyclohydrolase, found in Gluconobacter oxydans (strain 621H) (Gluconobacter suboxydans).